A 273-amino-acid chain; its full sequence is Dormancy associated translation inhibitor (273 aa).

As to quaternary structure, interacts with human TLR2.

In terms of biological role, involved in translation regulation. Can also stimulate macrophages and peripheral blood mononuclear cells (PBMC) to secrete important cytokines that may be significant in granuloma formation and its maintenance. Increases secretion of IFN-gamma, TNF-alpha, IL-1 beta and IL-8 through human Toll-like receptor 2 (TLR2) signaling pathway. The polypeptide is Dormancy associated translation inhibitor (Mycobacterium tuberculosis (strain CDC 1551 / Oshkosh)).